Here is a 565-residue protein sequence, read N- to C-terminus: Periplasmic trehalase (565 aa).

Positions 1–30 (MKSPAPSRPQKMALIPACIFLYFAALSVQA) are cleaved as a signal peptide. Substrate is bound by residues arginine 152, 159–160 (WD), asparagine 196, 205–207 (RSQ), 277–279 (RPE), and glycine 310. Active-site proton donor/acceptor residues include aspartate 312 and glutamate 496. Glutamate 511 lines the substrate pocket. The segment at 540–565 (DNVPATHPTVKSATTQPSTKEAQPTP) is disordered. Residues 548–565 (TVKSATTQPSTKEAQPTP) are compositionally biased toward polar residues.

Belongs to the glycosyl hydrolase 37 family. Monomer.

It localises to the periplasm. It carries out the reaction alpha,alpha-trehalose + H2O = alpha-D-glucose + beta-D-glucose. Functionally, provides the cells with the ability to utilize trehalose at high osmolarity by splitting it into glucose molecules that can subsequently be taken up by the phosphotransferase-mediated uptake system. In Shigella flexneri serotype 5b (strain 8401), this protein is Periplasmic trehalase.